The primary structure comprises 298 residues: Inosose dehydratase (298 aa).

This sequence belongs to the IolE/MocC family. Requires glutathione as cofactor. Co(2+) is required as a cofactor. Mn(2+) serves as cofactor.

The enzyme catalyses scyllo-inosose = 3D-3,5/4-trihydroxycyclohexane-1,2-dione + H2O. The protein operates within polyol metabolism; myo-inositol degradation into acetyl-CoA; acetyl-CoA from myo-inositol: step 2/7. Its function is as follows. Catalyzes the dehydration of inosose (2-keto-myo-inositol, 2KMI or 2,4,6/3,5-pentahydroxycyclohexanone) to 3D-(3,5/4)-trihydroxycyclohexane-1,2-dione (D-2,3-diketo-4-deoxy-epi-inositol). In Geobacillus thermodenitrificans (strain NG80-2), this protein is Inosose dehydratase.